We begin with the raw amino-acid sequence, 71 residues long: Large ribosomal subunit protein bL31 (71 aa).

Zn(2+) is bound by residues C16, C18, C37, and C40.

This sequence belongs to the bacterial ribosomal protein bL31 family. Type A subfamily. As to quaternary structure, part of the 50S ribosomal subunit. Zn(2+) is required as a cofactor.

Binds the 23S rRNA. In Actinobacillus succinogenes (strain ATCC 55618 / DSM 22257 / CCUG 43843 / 130Z), this protein is Large ribosomal subunit protein bL31.